Consider the following 252-residue polypeptide: Imidazole glycerol phosphate synthase subunit HisF (252 aa).

Catalysis depends on residues Asp-11 and Asp-130.

The protein belongs to the HisA/HisF family. As to quaternary structure, heterodimer of HisH and HisF.

The protein localises to the cytoplasm. The enzyme catalyses 5-[(5-phospho-1-deoxy-D-ribulos-1-ylimino)methylamino]-1-(5-phospho-beta-D-ribosyl)imidazole-4-carboxamide + L-glutamine = D-erythro-1-(imidazol-4-yl)glycerol 3-phosphate + 5-amino-1-(5-phospho-beta-D-ribosyl)imidazole-4-carboxamide + L-glutamate + H(+). It participates in amino-acid biosynthesis; L-histidine biosynthesis; L-histidine from 5-phospho-alpha-D-ribose 1-diphosphate: step 5/9. Its function is as follows. IGPS catalyzes the conversion of PRFAR and glutamine to IGP, AICAR and glutamate. The HisF subunit catalyzes the cyclization activity that produces IGP and AICAR from PRFAR using the ammonia provided by the HisH subunit. The protein is Imidazole glycerol phosphate synthase subunit HisF of Pelotomaculum thermopropionicum (strain DSM 13744 / JCM 10971 / SI).